The primary structure comprises 302 residues: Paired immunoglobulin-like type 2 receptor alpha (302 aa).

An N-terminal signal peptide occupies residues 1-31; it reads MALLISLPGGTPAMAQILLLLSSACLHAGNS. The Extracellular segment spans residues 32–198; sequence ERSNRKNGFG…GGLDLQTTVG (167 aa). Asn90 and Asn107 each carry an N-linked (GlcNAc...) asparagine glycan. The chain crosses the membrane as a helical span at residues 199–219; sequence LATAAAVFLVGVLGLIVFLWW. Residues 220–302 are Cytoplasmic-facing; sequence KRRRQGQKTK…ETVYSIVKAK (83 aa). Basic and acidic residues predominate over residues 228–248; it reads TKAEIPAREPLETSEKHESVG. Positions 228–293 are disordered; sequence TKAEIPAREP…LPVHGNPQEE (66 aa). 2 short sequence motifs (ITIM motif) span residues 265-270 and 294-299; these read IVYASI and TVYSIV. A compositionally biased stretch (polar residues) spans 270–280; it reads ISLSSPTSPGT.

As to quaternary structure, interacts with CD99. In terms of processing, phosphorylated on tyrosine residues.

The protein resides in the membrane. Its function is as follows. Paired receptors consist of highly related activating and inhibitory receptors and are widely involved in the regulation of the immune system. Receptor for CD99 and PIANP. This chain is Paired immunoglobulin-like type 2 receptor alpha (Pilra), found in Mus musculus (Mouse).